Here is a 361-residue protein sequence, read N- to C-terminus: tRNA-specific 2-thiouridylase MnmA (361 aa).

Residues 8–15 (AMSGGVDS) and methionine 35 contribute to the ATP site. The interval 95-97 (NPD) is interaction with target base in tRNA. Residue cysteine 100 is the Nucleophile of the active site. Cysteine 100 and cysteine 196 are disulfide-bonded. Glycine 124 is an ATP binding site. An interaction with tRNA region spans residues 146–148 (KDQ). Catalysis depends on cysteine 196, which acts as the Cysteine persulfide intermediate. Residues 303 to 304 (RY) are interaction with tRNA.

Belongs to the MnmA/TRMU family.

It is found in the cytoplasm. It catalyses the reaction S-sulfanyl-L-cysteinyl-[protein] + uridine(34) in tRNA + AH2 + ATP = 2-thiouridine(34) in tRNA + L-cysteinyl-[protein] + A + AMP + diphosphate + H(+). Catalyzes the 2-thiolation of uridine at the wobble position (U34) of tRNA, leading to the formation of s(2)U34. This chain is tRNA-specific 2-thiouridylase MnmA, found in Chlamydia pneumoniae (Chlamydophila pneumoniae).